The following is a 209-amino-acid chain: Putative amino acid efflux protein YcgF (209 aa).

Helical transmembrane passes span 1–21 (MNIF…VGPV), 39–59 (IFGL…YFGL), 62–82 (FLTA…VLTY), 110–130 (FASG…WLGI), 147–167 (LLIY…CMAI), and 184–204 (LTGI…YQGI).

The protein belongs to the Rht family.

The protein resides in the cell membrane. This is Putative amino acid efflux protein YcgF (ycgF) from Bacillus subtilis (strain 168).